The sequence spans 576 residues: Aspartate--tRNA ligase (576 aa).

Glutamate 170 is a binding site for L-aspartate. The aspartate stretch occupies residues 194–197 (QLFK). Residue arginine 216 participates in L-aspartate binding. ATP is bound by residues 216-218 (RDE) and glutamine 225. Residue histidine 438 coordinates L-aspartate. Glutamate 471 contacts ATP. Residue arginine 478 participates in L-aspartate binding. 523–526 (GLDR) provides a ligand contact to ATP.

Belongs to the class-II aminoacyl-tRNA synthetase family. Type 1 subfamily. Homodimer.

The protein resides in the cytoplasm. The enzyme catalyses tRNA(Asp) + L-aspartate + ATP = L-aspartyl-tRNA(Asp) + AMP + diphosphate. In terms of biological role, catalyzes the attachment of L-aspartate to tRNA(Asp) in a two-step reaction: L-aspartate is first activated by ATP to form Asp-AMP and then transferred to the acceptor end of tRNA(Asp). The chain is Aspartate--tRNA ligase from Fervidobacterium nodosum (strain ATCC 35602 / DSM 5306 / Rt17-B1).